A 197-amino-acid polypeptide reads, in one-letter code: dITP/XTP pyrophosphatase (197 aa).

Residue 11–16 (SHNAGK) coordinates substrate. Mg(2+) is bound by residues Glu-42 and Asp-71. The Proton acceptor role is filled by Asp-71. Substrate contacts are provided by residues Ser-72, 155–158 (FGYD), Lys-178, and 183–184 (HR).

This sequence belongs to the HAM1 NTPase family. In terms of assembly, homodimer. It depends on Mg(2+) as a cofactor.

It catalyses the reaction XTP + H2O = XMP + diphosphate + H(+). It carries out the reaction dITP + H2O = dIMP + diphosphate + H(+). The enzyme catalyses ITP + H2O = IMP + diphosphate + H(+). Its function is as follows. Pyrophosphatase that catalyzes the hydrolysis of nucleoside triphosphates to their monophosphate derivatives, with a high preference for the non-canonical purine nucleotides XTP (xanthosine triphosphate), dITP (deoxyinosine triphosphate) and ITP. Seems to function as a house-cleaning enzyme that removes non-canonical purine nucleotides from the nucleotide pool, thus preventing their incorporation into DNA/RNA and avoiding chromosomal lesions. The polypeptide is dITP/XTP pyrophosphatase (Pseudomonas aeruginosa (strain ATCC 15692 / DSM 22644 / CIP 104116 / JCM 14847 / LMG 12228 / 1C / PRS 101 / PAO1)).